Here is a 194-residue protein sequence, read N- to C-terminus: Fibroblast growth factor 7 (194 aa).

The N-terminal stretch at 1–31 (MRKWILTWILPSLLYRSCFHIICLVGTISLA) is a signal peptide. Asn45 carries an N-linked (GlcNAc...) asparagine glycan.

This sequence belongs to the heparin-binding growth factors family. In terms of assembly, interacts with FGFBP1. Interacts with FGFR2. Affinity between fibroblast growth factors (FGFs) and their receptors is increased by heparan sulfate glycosaminoglycans that function as coreceptors.

The protein resides in the secreted. In terms of biological role, plays an important role in the regulation of embryonic development, cell proliferation and cell differentiation. Required for normal branching morphogenesis. Growth factor active on keratinocytes. Possible major paracrine effector of normal epithelial cell proliferation. This chain is Fibroblast growth factor 7 (FGF7), found in Cervus elaphus (Red deer).